The following is a 441-amino-acid chain: Ribulose bisphosphate carboxylase large chain (441 aa).

Lysine 4 is subject to N6,N6,N6-trimethyllysine. Asparagine 113 and threonine 163 together coordinate substrate. Lysine 165 acts as the Proton acceptor in catalysis. Lysine 167 lines the substrate pocket. Mg(2+) is bound by residues lysine 191, aspartate 193, and glutamate 194. An N6-carboxylysine modification is found at lysine 191. Histidine 284 serves as the catalytic Proton acceptor. Substrate contacts are provided by arginine 285, histidine 317, and serine 369.

Belongs to the RuBisCO large chain family. Type I subfamily. Heterohexadecamer of 8 large chains and 8 small chains; disulfide-linked. The disulfide link is formed within the large subunit homodimers. Requires Mg(2+) as cofactor. The disulfide bond which can form in the large chain dimeric partners within the hexadecamer appears to be associated with oxidative stress and protein turnover.

The protein resides in the plastid. It localises to the chloroplast. The enzyme catalyses 2 (2R)-3-phosphoglycerate + 2 H(+) = D-ribulose 1,5-bisphosphate + CO2 + H2O. It catalyses the reaction D-ribulose 1,5-bisphosphate + O2 = 2-phosphoglycolate + (2R)-3-phosphoglycerate + 2 H(+). RuBisCO catalyzes two reactions: the carboxylation of D-ribulose 1,5-bisphosphate, the primary event in carbon dioxide fixation, as well as the oxidative fragmentation of the pentose substrate in the photorespiration process. Both reactions occur simultaneously and in competition at the same active site. The polypeptide is Ribulose bisphosphate carboxylase large chain (Heliamphora nutans (Venezuelan marsh pitcher plant)).